The following is a 29-amino-acid chain: Kunitz-type trypsin inhibitor IVTI (29 aa).

The protein belongs to the protease inhibitor I3 (leguminous Kunitz-type inhibitor) family. As to quaternary structure, monomer and dimer.

Functionally, inhibits bovine trypsin but not chymotrypsin. Also inhibits trypsin-like enzymes from midgut of several lepidopteran species and inhibits larval development in those species. Has fungicidal activity against yeast C.buinensis. Has a bacteriostatic effect against E.coli. Is not cytotoxic. This is Kunitz-type trypsin inhibitor IVTI from Inga vera (River koko).